Consider the following 698-residue polypeptide: Capon-like protein (698 aa).

A PID domain is found at Phe25 to Ser194. The tract at residues Glu191–His240 is disordered. Residues Asp201–Leu217 show a composition bias toward basic and acidic residues. 3 coiled-coil regions span residues Arg265–Leu327, Asn379–Asn484, and Leu554–Ala583. Residues Ser396–Ala423 show a composition bias toward low complexity. The interval Ser396 to Ala460 is disordered. Polar residues predominate over residues Tyr436–Asn447. A compositionally biased stretch (low complexity) spans Gln448 to Gln458. A disordered region spans residues Gly588–Lys698. Low complexity predominate over residues Ser590–Ser640. 2 stretches are compositionally biased toward polar residues: residues Leu662–Ser672 and Asn679–Lys698.

In terms of tissue distribution, expressed at higher level in wing imaginal disk.

Functionally, putative adapter protein. The sequence is that of Capon-like protein from Drosophila melanogaster (Fruit fly).